A 693-amino-acid chain; its full sequence is MSDRKYPLERVRNIGIIAHIDAGKTTTTERILYLTKRTHKIGNIDEGTTVMDWMEQEKARGITITSAATSAYWNGHHLNIIDTPGHVDFTAEVERSLRVLDGGVVVFDGVAGVEAQSETVWRQASRYGVPRICFINKMDRTGANYERTLGMIAERLKAKYLPLQIPIGCAETFRGNCDLLDFKCYGMDNSPEEPVETFDLPAAEKERAVKFRNMMIERLAEEDDEVMEAYLAGEELPIEKLKAAIRRVCLANKAIPIFCGTSLRNKGVKRLLDAVCDYLPSPLDIPAMKGTDPKTGESIERHTSDTEPFSALAFKIVSDPFVGRLVYFRIYSGSISAGSGAYNSTRGERERIGRLIRMHANDREEIEYADAGEIVASLGLRNTFTGDTLCDQNAPILLENIKFPEPVINLAIEPKTRSDQDKMTEGLQKLAEEDPTFKVKFDDETGQTVIYGMGELHLDVLVSRLLSEFKVNAGVGKPRVAYREAITAHAKAQGKFVRQSGGRGQYGDVTIEIEPRERGAGYEFVDNVKGGAIPRNFLMAAESGIRDTLETGVYAGYPMVDVKVIATDGSYHDVDSNENAFKMAGSMAIKAAVAKAKPILLEPIMKLEAVTPEEYMGDVIGDLNSRRGQIISVEPSPETTVITGTVPLAESFGYTTDLRSVTKGRATFSMEFESYREMPGELATQVVEAAGKK.

A tr-type G domain is found at 9–283 (ERVRNIGIIA…AVCDYLPSPL (275 aa)). Residues 18 to 25 (AHIDAGKT), 82 to 86 (DTPGH), and 136 to 139 (NKMD) each bind GTP.

This sequence belongs to the TRAFAC class translation factor GTPase superfamily. Classic translation factor GTPase family. EF-G/EF-2 subfamily.

The protein localises to the cytoplasm. Functionally, catalyzes the GTP-dependent ribosomal translocation step during translation elongation. During this step, the ribosome changes from the pre-translocational (PRE) to the post-translocational (POST) state as the newly formed A-site-bound peptidyl-tRNA and P-site-bound deacylated tRNA move to the P and E sites, respectively. Catalyzes the coordinated movement of the two tRNA molecules, the mRNA and conformational changes in the ribosome. The chain is Elongation factor G from Dehalococcoides mccartyi (strain ATCC BAA-2100 / JCM 16839 / KCTC 5957 / BAV1).